Here is a 346-residue protein sequence, read N- to C-terminus: Phosphoribosylformylglycinamidine cyclo-ligase (346 aa).

This sequence belongs to the AIR synthase family.

The protein resides in the cytoplasm. It carries out the reaction 2-formamido-N(1)-(5-O-phospho-beta-D-ribosyl)acetamidine + ATP = 5-amino-1-(5-phospho-beta-D-ribosyl)imidazole + ADP + phosphate + H(+). It participates in purine metabolism; IMP biosynthesis via de novo pathway; 5-amino-1-(5-phospho-D-ribosyl)imidazole from N(2)-formyl-N(1)-(5-phospho-D-ribosyl)glycinamide: step 2/2. The sequence is that of Phosphoribosylformylglycinamidine cyclo-ligase from Bacillus licheniformis (strain ATCC 14580 / DSM 13 / JCM 2505 / CCUG 7422 / NBRC 12200 / NCIMB 9375 / NCTC 10341 / NRRL NRS-1264 / Gibson 46).